A 535-amino-acid chain; its full sequence is Cytochrome P450 monooxygenase atE (535 aa).

Cys455 lines the heme pocket.

It belongs to the cytochrome P450 family. The cofactor is heme.

It catalyses the reaction 3-methylcatechol + AH2 + O2 = 3-methylbenzene-1,2,4-triol + A + H2O. It functions in the pathway secondary metabolite biosynthesis. Cytochrome P450 monooxygenase; part of the gene cluster that mediates the biosynthesis of terreic acid, a quinone epoxide inhibitor of Bruton's tyrosine kinase. The first step of the pathway is the synthesis of 6-methylsalicylic acid (6-MSA) by the 6-methylsalicylic acid synthase atX. In the biosynthesis of 6-MSA, atX utilizes one acetyl-CoA and three malonyl-CoAs as its substrates and catalyzes a series of programmed reactions including Claisen condensation, reduction, aldol cyclization, and the hydrolytic cleavage that yields 6-MSA. The 6-methylsalicylate 1-monooxygenase atA then catalyzes the decarboxylative hydroxylation of 6-MSA to 3-methylcatechol. The next step is the conversion of 3-methylcatechol to 3-methyl-1,2,4-benzenetriol by cytochrome P450 monooxygenase atE, which is enhanced by cytochrome P450 monooxygenase atG. Then, the epoxidase atD catalyzes the epoxidation and hydroxyl oxidation of 3-methyl-1,2,4-benzenetriol to terremutin. Lastly, GMC oxidoreductase atC oxidizes terremutin to terreic acid. The chain is Cytochrome P450 monooxygenase atE from Aspergillus terreus (strain NIH 2624 / FGSC A1156).